Here is a 135-residue protein sequence, read N- to C-terminus: Small ribosomal subunit protein bS16m (135 aa).

The N-terminal 34 residues, 1–34, are a transit peptide targeting the mitochondrion; it reads MVQLTTIFCKAYHGGHLTIRLALGGCTNRPFYRI.

This sequence belongs to the bacterial ribosomal protein bS16 family. In terms of assembly, component of the mitochondrial ribosome small subunit (28S) which comprises a 12S rRNA and about 30 distinct proteins.

Its subcellular location is the mitochondrion. The polypeptide is Small ribosomal subunit protein bS16m (Mrps16) (Mus musculus (Mouse)).